The sequence spans 1200 residues: uncharacterized protein (1200 aa).

Disordered regions lie at residues 282–302, 323–372, 392–491, 510–568, and 1056–1200; these read SQES…GCTS, LSEA…PQGS, SQEP…KASL, RAKS…RIGA, and SCPE…LASL. Low complexity predominate over residues 420–435; sequence ASSPRLSPASPAAAAS. The segment covering 437–448 has biased composition (basic and acidic residues); the sequence is TKIEVKTKERNG. Residues 518–527 are compositionally biased toward polar residues; the sequence is GTTQTKTSGP. Residues 1137–1153 are compositionally biased toward basic and acidic residues; that stretch reads EDGKGSHKLPDPAREHL. Residues 1160 to 1171 show a composition bias toward low complexity; sequence RQQPPRQSQVPR. Polar residues predominate over residues 1175–1200; the sequence is GSFSSEGTDSQTSLEDSPQTSPLASL.

This is an uncharacterized protein from Homo sapiens (Human).